The primary structure comprises 398 residues: Bifunctional enzyme IspD/IspF (398 aa).

The interval 1–234 (MANSRRTAAI…SRLAALLGDI (234 aa)) is 2-C-methyl-D-erythritol 4-phosphate cytidylyltransferase. Positions 235 to 398 (RTGTGYDVHA…LPWGPNGLSG (164 aa)) are 2-C-methyl-D-erythritol 2,4-cyclodiphosphate synthase. Residues Asp-241 and His-243 each contribute to the a divalent metal cation site. 4-CDP-2-C-methyl-D-erythritol 2-phosphate contacts are provided by residues 241–243 (DVH) and 267–268 (HS). A divalent metal cation is bound at residue His-275. 4-CDP-2-C-methyl-D-erythritol 2-phosphate is bound by residues 289 to 291 (DIG), 365 to 368 (TTSE), Phe-372, and Arg-375.

It in the N-terminal section; belongs to the IspD/TarI cytidylyltransferase family. IspD subfamily. This sequence in the C-terminal section; belongs to the IspF family. The cofactor is a divalent metal cation.

It carries out the reaction 2-C-methyl-D-erythritol 4-phosphate + CTP + H(+) = 4-CDP-2-C-methyl-D-erythritol + diphosphate. The enzyme catalyses 4-CDP-2-C-methyl-D-erythritol 2-phosphate = 2-C-methyl-D-erythritol 2,4-cyclic diphosphate + CMP. The protein operates within isoprenoid biosynthesis; isopentenyl diphosphate biosynthesis via DXP pathway; isopentenyl diphosphate from 1-deoxy-D-xylulose 5-phosphate: step 2/6. It functions in the pathway isoprenoid biosynthesis; isopentenyl diphosphate biosynthesis via DXP pathway; isopentenyl diphosphate from 1-deoxy-D-xylulose 5-phosphate: step 4/6. Functionally, bifunctional enzyme that catalyzes the formation of 4-diphosphocytidyl-2-C-methyl-D-erythritol from CTP and 2-C-methyl-D-erythritol 4-phosphate (MEP) (IspD), and catalyzes the conversion of 4-diphosphocytidyl-2-C-methyl-D-erythritol 2-phosphate (CDP-ME2P) to 2-C-methyl-D-erythritol 2,4-cyclodiphosphate (ME-CPP) with a corresponding release of cytidine 5-monophosphate (CMP) (IspF). This is Bifunctional enzyme IspD/IspF from Rhodopseudomonas palustris (strain BisA53).